Reading from the N-terminus, the 327-residue chain is L-serine dehydratase/L-threonine deaminase (327 aa).

The residue at position 2 (Ala2) is an N-acetylalanine. Lys41 carries the post-translational modification N6-(pyridoxal phosphate)lysine. Pro128 is a pyridoxal 5'-phosphate binding site.

Belongs to the serine/threonine dehydratase family. Homodimer. It depends on pyridoxal 5'-phosphate as a cofactor.

The protein localises to the cytoplasm. The enzyme catalyses L-serine = pyruvate + NH4(+). It catalyses the reaction L-threonine = 2-oxobutanoate + NH4(+). It functions in the pathway carbohydrate biosynthesis; gluconeogenesis. Catalyzes the pyridoxal-phosphate-dependent dehydrative deamination of L-threonine and L-serine to ammonia and alpha-ketobutyrate and pyruvate, respectively. This Mus musculus (Mouse) protein is L-serine dehydratase/L-threonine deaminase (Sds).